The following is a 673-amino-acid chain: DNA ligase (673 aa).

NAD(+) contacts are provided by residues 35 to 39, 84 to 85, and E115; these read DAQYD and SL. K117 serves as the catalytic N6-AMP-lysine intermediate. NAD(+) contacts are provided by R138, E178, K294, and K318. Positions 412, 415, 430, and 435 each coordinate Zn(2+). One can recognise a BRCT domain in the interval 594–673; the sequence is LQSDRLAGKS…DELHALLVDE (80 aa).

This sequence belongs to the NAD-dependent DNA ligase family. LigA subfamily. It depends on Mg(2+) as a cofactor. Requires Mn(2+) as cofactor.

It carries out the reaction NAD(+) + (deoxyribonucleotide)n-3'-hydroxyl + 5'-phospho-(deoxyribonucleotide)m = (deoxyribonucleotide)n+m + AMP + beta-nicotinamide D-nucleotide.. DNA ligase that catalyzes the formation of phosphodiester linkages between 5'-phosphoryl and 3'-hydroxyl groups in double-stranded DNA using NAD as a coenzyme and as the energy source for the reaction. It is essential for DNA replication and repair of damaged DNA. The sequence is that of DNA ligase from Herpetosiphon aurantiacus (strain ATCC 23779 / DSM 785 / 114-95).